The chain runs to 721 residues: Peptide-N(4)-(N-acetyl-beta-glucosaminyl)asparagine amidase (721 aa).

Residues cysteine 193, cysteine 196, cysteine 225, and cysteine 228 each coordinate Zn(2+). Cysteine 251 serves as the catalytic Nucleophile. Residues histidine 278 and aspartate 295 contribute to the active site.

Belongs to the transglutaminase-like superfamily. PNGase family. Requires Zn(2+) as cofactor.

The protein resides in the cytoplasm. It carries out the reaction Hydrolysis of an N(4)-(acetyl-beta-D-glucosaminyl)asparagine residue in which the glucosamine residue may be further glycosylated, to yield a (substituted) N-acetyl-beta-D-glucosaminylamine and a peptide containing an aspartate residue.. In terms of biological role, specifically deglycosylates the denatured form of N-linked glycoproteins in the cytoplasm and assists their proteasome-mediated degradation. Cleaves the beta-aspartyl-glucosamine (GlcNAc) of the glycan and the amide side chain of Asn, converting Asn to Asp. Prefers proteins containing high-mannose over those bearing complex type oligosaccharides. Can recognize misfolded proteins in the endoplasmic reticulum that are exported to the cytosol to be destroyed and deglycosylate them, while it has no activity toward native proteins. Deglycosylation is a prerequisite for subsequent proteasome-mediated degradation of some, but not all, misfolded glycoproteins. The sequence is that of Peptide-N(4)-(N-acetyl-beta-glucosaminyl)asparagine amidase (PNG1) from Arabidopsis thaliana (Mouse-ear cress).